The following is a 421-amino-acid chain: Gamma-glutamyl phosphate reductase (421 aa).

It belongs to the gamma-glutamyl phosphate reductase family.

It is found in the cytoplasm. The enzyme catalyses L-glutamate 5-semialdehyde + phosphate + NADP(+) = L-glutamyl 5-phosphate + NADPH + H(+). It participates in amino-acid biosynthesis; L-proline biosynthesis; L-glutamate 5-semialdehyde from L-glutamate: step 2/2. Functionally, catalyzes the NADPH-dependent reduction of L-glutamate 5-phosphate into L-glutamate 5-semialdehyde and phosphate. The product spontaneously undergoes cyclization to form 1-pyrroline-5-carboxylate. This is Gamma-glutamyl phosphate reductase from Brucella suis biovar 1 (strain 1330).